The sequence spans 70 residues: Large ribosomal subunit protein bL31 (70 aa).

Cys16, Cys18, Cys37, and Cys40 together coordinate Zn(2+).

Belongs to the bacterial ribosomal protein bL31 family. Type A subfamily. As to quaternary structure, part of the 50S ribosomal subunit. It depends on Zn(2+) as a cofactor.

Functionally, binds the 23S rRNA. The polypeptide is Large ribosomal subunit protein bL31 (Erwinia tasmaniensis (strain DSM 17950 / CFBP 7177 / CIP 109463 / NCPPB 4357 / Et1/99)).